Consider the following 1374-residue polypeptide: Y' element ATP-dependent helicase YML133C (1374 aa).

In terms of domain architecture, Helicase ATP-binding spans 375–552 (EIYMADTPSV…LQRIGLTGLA (178 aa)). 388–395 (APPGYGKT) serves as a coordination point for ATP. Positions 609 to 758 (KLLLALFEIE…EFYGLESKKG (150 aa)) constitute a Helicase C-terminal domain. Residues 832-975 (ANASTNATTN…ATTTESTNAS (144 aa)) show a composition bias toward low complexity. Residues 832-999 (ANASTNATTN…RFHPVTDINK (168 aa)) are disordered. Residues 976–999 (AKEDANKDGNAEDNRFHPVTDINK) are compositionally biased toward basic and acidic residues.

This sequence belongs to the helicase family. Yeast subtelomeric Y' repeat subfamily.

In terms of biological role, catalyzes DNA unwinding and is involved in telomerase-independent telomere maintenance. The protein is Y' element ATP-dependent helicase YML133C of Saccharomyces cerevisiae (strain ATCC 204508 / S288c) (Baker's yeast).